We begin with the raw amino-acid sequence, 773 residues long: Lon protease homolog 2, peroxisomal (773 aa).

The Lon N-terminal domain occupies 9–198 (LPVIVVDSGV…MCEKWMQMQR (190 aa)). 336-343 (GPPGIGKT) is a binding site for ATP. The Lon proteolytic domain maps to 587–766 (PLPPGVCFGL…EDVIEAMMEK (180 aa)). Residues S672 and K715 contribute to the active site. Positions 771–773 (AKL) match the Microbody targeting signal motif.

This sequence belongs to the peptidase S16 family.

It localises to the peroxisome matrix. It carries out the reaction Hydrolysis of proteins in presence of ATP.. In terms of biological role, ATP-dependent serine protease that mediates the selective degradation of misfolded and unassembled polypeptides in the peroxisomal matrix. Necessary for type 2 peroxisome targeting signal (PTS2)-containing protein processing and facilitates peroxisome matrix protein import. The chain is Lon protease homolog 2, peroxisomal from Caenorhabditis briggsae.